Here is a 437-residue protein sequence, read N- to C-terminus: Ribosomal protein uS12 methylthiotransferase RimO (437 aa).

The 111-residue stretch at Pro-4 to Pro-114 folds into the MTTase N-terminal domain. Cys-13, Cys-49, Cys-78, Cys-145, Cys-149, and Cys-152 together coordinate [4Fe-4S] cluster. The Radical SAM core domain maps to Leu-131–Ala-368. In terms of domain architecture, TRAM spans Arg-371 to Asp-437.

This sequence belongs to the methylthiotransferase family. RimO subfamily. The cofactor is [4Fe-4S] cluster.

Its subcellular location is the cytoplasm. It catalyses the reaction L-aspartate(89)-[ribosomal protein uS12]-hydrogen + (sulfur carrier)-SH + AH2 + 2 S-adenosyl-L-methionine = 3-methylsulfanyl-L-aspartate(89)-[ribosomal protein uS12]-hydrogen + (sulfur carrier)-H + 5'-deoxyadenosine + L-methionine + A + S-adenosyl-L-homocysteine + 2 H(+). In terms of biological role, catalyzes the methylthiolation of an aspartic acid residue of ribosomal protein uS12. The polypeptide is Ribosomal protein uS12 methylthiotransferase RimO (Methylococcus capsulatus (strain ATCC 33009 / NCIMB 11132 / Bath)).